The following is a 590-amino-acid chain: Cyclin-dependent kinase-like 3 (590 aa).

Residues 4–286 (YETLGKVGEG…SSDLLHHEYF (283 aa)) form the Protein kinase domain. ATP contacts are provided by residues 10-18 (VGEGSYGTV) and Lys-33. Positions 45 to 51 (KIAMREI) match the [NKR]KIAxRE motif. Asp-125 functions as the Proton acceptor in the catalytic mechanism. Position 158 is a phosphothreonine (Thr-158). A Phosphotyrosine modification is found at Tyr-160. 2 disordered regions span residues 459–508 (RAKK…SNEN) and 547–590 (LKRE…PDVE). Over residues 466-477 (SSQSIGQVMPNS) the composition is skewed to polar residues. Composition is skewed to basic and acidic residues over residues 547-556 (LKRESKKTDS) and 580-590 (TERKKNLPDVE).

This sequence belongs to the protein kinase superfamily. CMGC Ser/Thr protein kinase family. CDC2/CDKX subfamily.

Its subcellular location is the cytoplasm. The enzyme catalyses L-seryl-[protein] + ATP = O-phospho-L-seryl-[protein] + ADP + H(+). It catalyses the reaction L-threonyl-[protein] + ATP = O-phospho-L-threonyl-[protein] + ADP + H(+). This Macaca fascicularis (Crab-eating macaque) protein is Cyclin-dependent kinase-like 3.